Consider the following 238-residue polypeptide: Protein shisa-3 homolog (238 aa).

Residues 1-21 form the signal peptide; sequence MGALLAFCLLVGLLRWGPAGA. Topologically, residues 22–98 are lumenal; it reads QQPGEYCHGW…GITAQPVYVP (77 aa). Residues 99–119 form a helical membrane-spanning segment; that stretch reads FLIVGSIFIAFIILGSLVAIY. Topologically, residues 120–238 are cytoplasmic; that stretch reads CCTCLRPKEP…GKSCPDFSSS (119 aa).

Belongs to the shisa family.

The protein resides in the endoplasmic reticulum membrane. Plays an essential role in the maturation of presomitic mesoderm cells by individual attenuation of both FGF and WNT signaling. In Mus musculus (Mouse), this protein is Protein shisa-3 homolog (Shisa3).